The sequence spans 188 residues: Elongation factor P (188 aa).

It belongs to the elongation factor P family.

It localises to the cytoplasm. It participates in protein biosynthesis; polypeptide chain elongation. Its function is as follows. Involved in peptide bond synthesis. Stimulates efficient translation and peptide-bond synthesis on native or reconstituted 70S ribosomes in vitro. Probably functions indirectly by altering the affinity of the ribosome for aminoacyl-tRNA, thus increasing their reactivity as acceptors for peptidyl transferase. The chain is Elongation factor P from Phocaeicola vulgatus (strain ATCC 8482 / DSM 1447 / JCM 5826 / CCUG 4940 / NBRC 14291 / NCTC 11154) (Bacteroides vulgatus).